A 520-amino-acid chain; its full sequence is MGNSLGCSASGERLVSAARDGDAVEARMLLELSPALARYSTFGGLNSPLHFAAAKGHLDIVTLLLEKGADVNVRNYCGQTALMHACRHGHWEVVQMLLLFRCNVTRADYLSGRTALHFAAHDGLVRCVRLLLADFVPSAPLEDGASSTVDGGECQTNSGSSPCSSLGLKFNESARLRYINKPADGGVTALHMAALNGHFDCMQLLIDLGANVSAVTFPYGTTANLIGAGSTPLHYAAGGGNAECCQLLLSKGASKLTLNCNGWLPIDVARMFGRRFLEPLLSPNSNSSIPAYQPSNYLALPFMSILNIAREFGLLHTVASVDDSDLCAVCLERSCSVAAEGCCHEFCIKCALYLCSTSNTRVEFTGPPGSIPCPLCRNGIMSFTKLPSTPTEGLKSSSALTFCNPCMLNTRSVDSPATISKAEIRRNRVAAVSSELVCPLTCSPFPSSALPTCRCSDDDPCDAIETQDGSEVQSPQPSHCASMEMDKREQQDLDRTSCSGMFWSRRSCHREEQCNAEINA.

ANK repeat units lie at residues 44-73 (GLNSPLHFAAAKGHLDIVTLLLEKGADVNV), 77-106 (CGQTALMHACRHGHWEVVQMLLLFRCNVTR), 111-140 (SGRTALHFAAHDGLVRCVRLLLADFVPSAP), 185-214 (GGVTALHMAALNGHFDCMQLLIDLGANVSA), and 228-258 (AGSTPLHYAAGGGNAECCQLLLSKGASKLTL). The RING-type zinc-finger motif lies at 327 to 377 (CAVCLERSCSVAAEGCCHEFCIKCALYLCSTSNTRVEFTGPPGSIPCPLCR). The span at 467–479 (QDGSEVQSPQPSH) shows a compositional bias: polar residues. The interval 467–493 (QDGSEVQSPQPSHCASMEMDKREQQDL) is disordered. A compositionally biased stretch (basic and acidic residues) spans 484-493 (EMDKREQQDL).

The catalysed reaction is S-ubiquitinyl-[E2 ubiquitin-conjugating enzyme]-L-cysteine + [acceptor protein]-L-lysine = [E2 ubiquitin-conjugating enzyme]-L-cysteine + N(6)-ubiquitinyl-[acceptor protein]-L-lysine.. It functions in the pathway protein modification; protein ubiquitination. This is Probable E3 ubiquitin-protein ligase XBOS33 (XBOS33) from Oryza sativa subsp. japonica (Rice).